The chain runs to 222 residues: Triosephosphate isomerase (222 aa).

Position 9–11 (9–11) interacts with substrate; sequence NYK. Catalysis depends on histidine 93, which acts as the Electrophile. Glutamate 141 acts as the Proton acceptor in catalysis. Residues isoleucine 146, glycine 181, and 202-203 each bind substrate; that span reads AS.

This sequence belongs to the triosephosphate isomerase family. As to quaternary structure, homotetramer; dimer of dimers.

It localises to the cytoplasm. It carries out the reaction D-glyceraldehyde 3-phosphate = dihydroxyacetone phosphate. The protein operates within carbohydrate biosynthesis; gluconeogenesis. Its pathway is carbohydrate degradation; glycolysis; D-glyceraldehyde 3-phosphate from glycerone phosphate: step 1/1. Involved in the gluconeogenesis. Catalyzes stereospecifically the conversion of dihydroxyacetone phosphate (DHAP) to D-glyceraldehyde-3-phosphate (G3P). The protein is Triosephosphate isomerase of Methanosarcina acetivorans (strain ATCC 35395 / DSM 2834 / JCM 12185 / C2A).